The following is a 248-amino-acid chain: Coenzyme F420:L-glutamate ligase (248 aa).

GTP contacts are provided by residues 15–18, 45–46, and K50; these read IPLI and ET. D115 contacts a divalent metal cation. GTP is bound at residue N118. A divalent metal cation-binding residues include D155, S156, and Q213. Position 211–218 (211–218) interacts with GTP; it reads MGQSDEGI.

It belongs to the CofE family. Homodimer. The cofactor is Mg(2+). Mn(2+) serves as cofactor. It depends on K(+) as a cofactor.

It carries out the reaction oxidized coenzyme F420-0 + GTP + L-glutamate = oxidized coenzyme F420-1 + GDP + phosphate + H(+). The enzyme catalyses oxidized coenzyme F420-1 + GTP + L-glutamate = oxidized coenzyme F420-2 + GDP + phosphate + H(+). The protein operates within cofactor biosynthesis; coenzyme F420 biosynthesis. Functionally, catalyzes the GTP-dependent successive addition of two or more gamma-linked L-glutamates to the L-lactyl phosphodiester of 7,8-didemethyl-8-hydroxy-5-deazariboflavin (F420-0) to form coenzyme F420-0-glutamyl-glutamate (F420-2) or polyglutamated F420 derivatives. The chain is Coenzyme F420:L-glutamate ligase from Methanococcus maripaludis (strain C6 / ATCC BAA-1332).